Here is a 403-residue protein sequence, read N- to C-terminus: Keratin, type I cytoskeletal 19 (403 aa).

The head stretch occupies residues 1 to 82 (MTSYSYRQSS…TVTDGLLGGN (82 aa)). R7 bears the Omega-N-methylarginine mark. S14 carries the phosphoserine modification. R24 is modified (asymmetric dimethylarginine; alternate). R24 is modified (omega-N-methylarginine; alternate). S27 is subject to Phosphoserine. The residue at position 32 (R32) is an Omega-N-methylarginine. Phosphoserine occurs at positions 35 and 40. An omega-N-methylarginine mark is found at R43 and R51. Phosphoserine is present on residues S57 and S67. The coil 1A stretch occupies residues 83–118 (EKITMQNLNDRLASYLDKVRALEQANGELEVKIRDW). In terms of domain architecture, IF rod spans 83–394 (EKITMQNLND…SLLEGQEAHY (312 aa)). The tract at residues 119–136 (YQKQGPGPFRDYSQYFKT) is linker 1. Residues 137 to 228 (IEDLRDKILG…KNHEEEISAL (92 aa)) form a coil 1B region. Positions 229–251 (RSQVGGQVSVEVDSTPGIDLAKI) are linker 12. The necessary for interaction with PNN stretch occupies residues 247-393 (DLAKILSEMR…RSLLEGQEAH (147 aa)). Residues 252–390 (LSEMRSQYEA…ATYRSLLEGQ (139 aa)) form a coil 2 region. T326 bears the Phosphothreonine mark. The rod-like helical tail stretch occupies residues 391–403 (EAHYNSLSIAKAL). Phosphotyrosine is present on Y394. Residue S398 is modified to Phosphoserine.

It belongs to the intermediate filament family. Heterotetramer of two type I and two type II keratins. Interacts with PNN. Interacts with the actin-binding domain of DMD. As to expression, expressed in brain, heart, skin and in costameres of myoplasm at the sarcolemmal membrane in skeletal and cardiac muscle fibers. Undifferentiated gonads and somatic cells of ovarian cords throughout the fetal ovary development.

In terms of biological role, involved in the organization of myofibers. Together with KRT8, helps to link the contractile apparatus to dystrophin at the costameres of striated muscle. This is Keratin, type I cytoskeletal 19 (Krt19) from Rattus norvegicus (Rat).